Here is an 814-residue protein sequence, read N- to C-terminus: Echinoderm microtubule-associated protein-like 1 (814 aa).

Residues 31 to 72 (SMEISDRIASLEQRVQMQEDDIQLLKSALADVVRRLNITEEQ) adopt a coiled-coil conformation. The interval 77 to 185 (NRKGPTKARP…EPTFSPEEGY (109 aa)) is disordered. Polar residues predominate over residues 92-101 (PLRTTVNNGT). The segment covering 103 to 115 (LPKKPSASLPSPS) has biased composition (low complexity). A Phosphoserine modification is found at serine 113. Residues 127–137 (KSINRTSSSER) are compositionally biased toward polar residues. Over residues 142-152 (GRRESSGDSKG) the composition is skewed to basic and acidic residues. Low complexity predominate over residues 155–167 (NRTGSTSSSSSGK). Positions 175–814 (KEPTFSPEEG…DTSIMQWRVI (640 aa)) are tandem atypical propeller in EMLs. WD repeat units lie at residues 260-309 (EQLQ…IWDS), 314-357 (TLHV…VWDW), 362-399 (RLAD…FWTL), 408-445 (QGLF…VWGK), 449-488 (RISY…SWNG), 492-529 (KLHK…LQGT), 534-571 (FTPI…LWDA), 577-612 (VWDK…VFDT), 616-654 (DLVT…IYGV), 663-700 (RVGK…YWVP), 708-767 (SVET…LFSY), and 774-813 (APSH…QWRV).

The protein belongs to the WD repeat EMAP family. In terms of assembly, homotrimer; self-association is mediated by the N-terminal coiled coil. Does not interact with EML3. Binds repolymerizing microtubules. Binds unpolymerized tubulins via its WD repeat region. Interacts with TASOR.

The protein localises to the cytoplasm. It localises to the perinuclear region. It is found in the cytoskeleton. Modulates the assembly and organization of the microtubule cytoskeleton, and probably plays a role in regulating the orientation of the mitotic spindle and the orientation of the plane of cell division. Required for normal proliferation of neuronal progenitor cells in the developing brain and for normal brain development. Does not affect neuron migration per se. This chain is Echinoderm microtubule-associated protein-like 1 (Eml1), found in Rattus norvegicus (Rat).